Consider the following 305-residue polypeptide: Major fimbrium anchoring subunit FimB (305 aa).

The signal sequence occupies residues 1-22 (MNDAKKYIVSVLILLVAGMFGG). Residue C23 is the site of N-palmitoyl cysteine attachment. Residue C23 is the site of S-diacylglycerol cysteine attachment.

Belongs to the bacteroidetes fimbrillin superfamily. FimB/Mfa2 family. FimB is not part of the fimbrium itself, but anchors the fimbrium in the outer membrane. Linear, head-to-tail oligomerization of fimbrial subunits mediates assembly of the fimbrium stalk, while the minor components FimC, FimD and FimE probably form the fimbrium tip. The anchoring subunit FimB limits fimbrium length and is important for solid fimbrium attachment to the outer membrane. In its absence, the major fimbriae become very long and are easily detached from the membrane.

Its subcellular location is the cell outer membrane. Its function is as follows. Anchoring subunit of the major fimbriae. Regulates fimbrial length. These filamentous pili are attached to the cell surface; they mediate biofilm formation, adhesion onto host cells and onto other bacteria that are part of the oral microbiome. Fimbriae of P.gingivalis are major virulence factors. This is Major fimbrium anchoring subunit FimB from Porphyromonas gingivalis (Bacteroides gingivalis).